Here is a 245-residue protein sequence, read N- to C-terminus: 1-(5-phosphoribosyl)-5-[(5-phosphoribosylamino)methylideneamino] imidazole-4-carboxamide isomerase (245 aa).

D7 (proton acceptor) is an active-site residue. The active-site Proton donor is the D129.

Belongs to the HisA/HisF family.

It localises to the cytoplasm. It carries out the reaction 1-(5-phospho-beta-D-ribosyl)-5-[(5-phospho-beta-D-ribosylamino)methylideneamino]imidazole-4-carboxamide = 5-[(5-phospho-1-deoxy-D-ribulos-1-ylimino)methylamino]-1-(5-phospho-beta-D-ribosyl)imidazole-4-carboxamide. It participates in amino-acid biosynthesis; L-histidine biosynthesis; L-histidine from 5-phospho-alpha-D-ribose 1-diphosphate: step 4/9. This chain is 1-(5-phosphoribosyl)-5-[(5-phosphoribosylamino)methylideneamino] imidazole-4-carboxamide isomerase, found in Yersinia pestis bv. Antiqua (strain Antiqua).